A 545-amino-acid chain; its full sequence is Light-independent protochlorophyllide reductase subunit N (545 aa).

Cysteine 102, cysteine 127, and cysteine 187 together coordinate [4Fe-4S] cluster.

It belongs to the BchN/ChlN family. As to quaternary structure, protochlorophyllide reductase is composed of three subunits; ChlL, ChlN and ChlB. Forms a heterotetramer of two ChlB and two ChlN subunits. [4Fe-4S] cluster serves as cofactor.

It localises to the plastid. Its subcellular location is the chloroplast. The enzyme catalyses chlorophyllide a + oxidized 2[4Fe-4S]-[ferredoxin] + 2 ADP + 2 phosphate = protochlorophyllide a + reduced 2[4Fe-4S]-[ferredoxin] + 2 ATP + 2 H2O. It participates in porphyrin-containing compound metabolism; chlorophyll biosynthesis (light-independent). In terms of biological role, component of the dark-operative protochlorophyllide reductase (DPOR) that uses Mg-ATP and reduced ferredoxin to reduce ring D of protochlorophyllide (Pchlide) to form chlorophyllide a (Chlide). This reaction is light-independent. The NB-protein (ChlN-ChlB) is the catalytic component of the complex. This chain is Light-independent protochlorophyllide reductase subunit N, found in Chlamydomonas reinhardtii (Chlamydomonas smithii).